Consider the following 102-residue polypeptide: Urease subunit beta (102 aa).

The protein belongs to the urease beta subunit family. As to quaternary structure, heterotrimer of UreA (gamma), UreB (beta) and UreC (alpha) subunits. Three heterotrimers associate to form the active enzyme.

The protein resides in the cytoplasm. It carries out the reaction urea + 2 H2O + H(+) = hydrogencarbonate + 2 NH4(+). The protein operates within nitrogen metabolism; urea degradation; CO(2) and NH(3) from urea (urease route): step 1/1. The protein is Urease subunit beta of Trichodesmium erythraeum (strain IMS101).